The following is a 334-amino-acid chain: Glyceraldehyde-3-phosphate dehydrogenase (334 aa).

Residues 12–13 and G111 contribute to the NAD(+) site; that span reads TI. Residue 140-142 participates in D-glyceraldehyde 3-phosphate binding; sequence SCN. Residue C141 is the Nucleophile of the active site. Position 167 (R167) interacts with NAD(+). 192-193 lines the D-glyceraldehyde 3-phosphate pocket; sequence HG. Q298 contributes to the NAD(+) binding site.

It belongs to the glyceraldehyde-3-phosphate dehydrogenase family. As to quaternary structure, homotetramer.

The protein resides in the encapsulin nanocompartment. It carries out the reaction D-glyceraldehyde 3-phosphate + phosphate + NADP(+) = (2R)-3-phospho-glyceroyl phosphate + NADPH + H(+). It catalyses the reaction D-glyceraldehyde 3-phosphate + phosphate + NAD(+) = (2R)-3-phospho-glyceroyl phosphate + NADH + H(+). It participates in carbohydrate degradation; glycolysis; pyruvate from D-glyceraldehyde 3-phosphate: step 1/5. Possible cargo protein of a type 4B encapsulin nanocompartment. Active in the presence of NAD and NADP, prefers NADP. This Pyrococcus furiosus (strain ATCC 43587 / DSM 3638 / JCM 8422 / Vc1) protein is Glyceraldehyde-3-phosphate dehydrogenase (gap).